The primary structure comprises 128 residues: Fluoride-specific ion channel FluC (128 aa).

4 consecutive transmembrane segments (helical) span residues Leu3 to Phe23, Thr33 to Ile53, Phe69 to Val89, and Trp99 to Ile119. Gly76 and Thr79 together coordinate Na(+).

The protein belongs to the fluoride channel Fluc/FEX (TC 1.A.43) family.

The protein localises to the cell inner membrane. The enzyme catalyses fluoride(in) = fluoride(out). Its activity is regulated as follows. Na(+) is not transported, but it plays an essential structural role and its presence is essential for fluoride channel function. Fluoride-specific ion channel. Important for reducing fluoride concentration in the cell, thus reducing its toxicity. The polypeptide is Fluoride-specific ion channel FluC (Nitrosospira multiformis (strain ATCC 25196 / NCIMB 11849 / C 71)).